The sequence spans 2149 residues: Serine/threonine-protein kinase WNK2 (2149 aa).

Residues 1-10 (MDGDGGRRDA) show a composition bias toward basic and acidic residues. Disordered stretches follow at residues 1–75 (MDGD…QRRV) and 87–183 (ERAR…EDDL). Residues R19 and R30 each carry the omega-N-methylarginine modification. S45 bears the Phosphoserine mark. Residues 95-114 (APAPAAPAAPPGSPSVPSDP) are compositionally biased toward pro residues. Basic and acidic residues predominate over residues 161–172 (AKPEPGRARKDE). Positions 173-182 (PEEEEDDEDD) are enriched in acidic residues. The 259-residue stretch at 195 to 453 (LKFDIELGRG…IKDLLSHAFF (259 aa)) folds into the Protein kinase domain. ATP is bound by residues S205, 275-278 (TELM), and K325. D342 acts as the Proton acceptor in catalysis. A phosphoserine; by autocatalysis mark is found at S352 and S356. At S560 the chain carries Phosphoserine. Disordered stretches follow at residues 578 to 630 (HAQS…DSQS), 703 to 728 (SMSF…APPV), and 1067 to 1133 (QEEQ…ERAS). Polar residues predominate over residues 605 to 625 (ASVTSLASDSTFDSGQGSTVY). Residues 709–728 (VLPPPSTPVPTGPSQPAPPV) are compositionally biased toward pro residues. Residues 1081 to 1092 (QSSESFGGSDVT) are compositionally biased toward polar residues. The residue at position 1098 (S1098) is a Phosphoserine. The segment covering 1115–1126 (ARKHHRRSTRAR) has biased composition (basic residues). A Phosphoserine modification is found at S1210. 2 disordered regions span residues 1211-1234 (EDTD…CGLA) and 1270-1502 (PATD…GFVD). Composition is skewed to low complexity over residues 1275–1292 (SESS…EASQ) and 1317–1353 (SQAG…STVP). Residues 1386–1400 (RSAQCTAQPLSTGQG) are compositionally biased toward polar residues. Residues 1470 to 1485 (LPSPPLGPTAPPPPPS) show a composition bias toward pro residues. S1507, S1566, and S1594 each carry phosphoserine. Disordered stretches follow at residues 1521–1727 (VPTS…PSSP) and 1739–1778 (ASSI…GGVA). Polar residues predominate over residues 1553–1567 (SDKTPSLTQQTQPSL). A compositionally biased stretch (low complexity) spans 1587–1597 (SSPMTAESSSS). Over residues 1610 to 1629 (ASDSSTAPSVPQDASGSSVP) the composition is skewed to polar residues. S1725, S1726, S1770, and S1797 each carry phosphoserine. Residues 1916–1928 (ASSTGHLSDSSRG) show a composition bias toward polar residues. A disordered region spans residues 1916–1947 (ASSTGHLSDSSRGPPTKDPRGTKAVQTQQPCS). S1962 carries the phosphoserine modification. The segment covering 2018 to 2031 (SSLYDSPGSSTSSL) has biased composition (polar residues). 2 disordered regions span residues 2018–2044 (SSLY…PTLH) and 2122–2149 (GPLS…EKPD). Positions 2122–2135 (GPLSTTATPGATPA) are enriched in low complexity.

It belongs to the protein kinase superfamily. Ser/Thr protein kinase family. WNK subfamily. In terms of assembly, forms a complex with the phosphorylated form of STK39 in the brain. Mg(2+) serves as cofactor. Autophosphorylated. Autophosphorylation at Ser-352 and Ser-356 promotes its activity. As to expression, brain and heart.

Its subcellular location is the cytoplasm. It is found in the cell membrane. The catalysed reaction is L-seryl-[protein] + ATP = O-phospho-L-seryl-[protein] + ADP + H(+). It catalyses the reaction L-threonyl-[protein] + ATP = O-phospho-L-threonyl-[protein] + ADP + H(+). Activation requires autophosphorylation of Ser-356 and, to a lower extent, Ser-352. In terms of biological role, serine/threonine-protein kinase component of the WNK2-SPAK/OSR1 kinase cascade, which plays an important role in the regulation of electrolyte homeostasis, cell signaling, survival, and proliferation. The WNK2-SPAK/OSR1 kinase cascade is composed of WNK2, which mediates phosphorylation and activation of downstream kinases OXSR1/OSR1 and STK39/SPAK. Following activation, OXSR1/OSR1 and STK39/SPAK catalyze phosphorylation of ion cotransporters, regulating their activity. Acts as an activator and inhibitor of sodium-coupled chloride cotransporters and potassium-coupled chloride cotransporters respectively. Activates SLC12A2, SCNN1A, SCNN1B, SCNN1D and SGK1 and inhibits SLC12A5. Negatively regulates the EGF-induced activation of the ERK/MAPK-pathway and the downstream cell cycle progression. Affects MAPK3/MAPK1 activity by modulating the activity of MAP2K1 and this modulation depends on phosphorylation of MAP2K1 by PAK1. WNK2 acts by interfering with the activity of PAK1 by controlling the balance of the activity of upstream regulators of PAK1 activity, RHOA and RAC1, which display reciprocal activity. The chain is Serine/threonine-protein kinase WNK2 from Mus musculus (Mouse).